Reading from the N-terminus, the 257-residue chain is Mitochondrial distribution and morphology protein 12 (257 aa).

Residues 1–256 (MSFEINWEKL…WPSWVNLDFN (256 aa)) form the SMP-LTD domain. A disordered region spans residues 74–98 (YEEDNETSSEMHGRDGQNVGESGEE).

Belongs to the MDM12 family. Component of the ER-mitochondria encounter structure (ERMES) or MDM complex, composed of MMM1, MDM10, MDM12 and MDM34. An MMM1 homodimer associates with one molecule of MDM12 on each side in a pairwise head-to-tail manner, and the SMP-LTD domains of MMM1 and MDM12 generate a continuous hydrophobic tunnel for phospholipid trafficking.

The protein localises to the mitochondrion outer membrane. It localises to the endoplasmic reticulum membrane. In terms of biological role, component of the ERMES/MDM complex, which serves as a molecular tether to connect the endoplasmic reticulum (ER) and mitochondria. Components of this complex are involved in the control of mitochondrial shape and protein biogenesis, and function in nonvesicular lipid trafficking between the ER and mitochondria. MDM12 is required for the interaction of the ER-resident membrane protein MMM1 and the outer mitochondrial membrane-resident beta-barrel protein MDM10. The MDM12-MMM1 subcomplex functions in the major beta-barrel assembly pathway that is responsible for biogenesis of all mitochondrial outer membrane beta-barrel proteins, and acts in a late step after the SAM complex. The MDM10-MDM12-MMM1 subcomplex further acts in the TOM40-specific pathway after the action of the MDM12-MMM1 complex. Essential for establishing and maintaining the structure of mitochondria and maintenance of mtDNA nucleoids. The sequence is that of Mitochondrial distribution and morphology protein 12 from Candida glabrata (strain ATCC 2001 / BCRC 20586 / JCM 3761 / NBRC 0622 / NRRL Y-65 / CBS 138) (Yeast).